The sequence spans 209 residues: Glutathione S-transferase 1, isoform D (209 aa).

Residues 1–80 (MDFYYLPGSA…YLAEKYGKDD (80 aa)) enclose the GST N-terminal domain. Glutathione-binding positions include Ser9, 50–52 (HCI), and 64–66 (ESR). The 122-residue stretch at 86-207 (DPQKRAVVNQ…AGADEFKAKF (122 aa)) folds into the GST C-terminal domain.

It belongs to the GST superfamily. Theta family. In terms of assembly, homodimer.

The catalysed reaction is RX + glutathione = an S-substituted glutathione + a halide anion + H(+). The enzyme catalyses 1,1,1-trichloro-2,2-bis(4-chlorophenyl)ethane = 1,1-dichloro-2,2-bis(4-chlorophenyl)ethylene + chloride + H(+). With respect to regulation, inhibited by S-hexylglutathione. In terms of biological role, conjugation of reduced glutathione to a wide number of exogenous and endogenous hydrophobic electrophiles. Has DDT dehydrochlorinase activity. The chain is Glutathione S-transferase 1, isoform D (GstD1) from Anopheles gambiae (African malaria mosquito).